A 168-amino-acid chain; its full sequence is MAAFTSTTTAAAASPTPCRPAALVARSSAAPLRSAAPVVVAAGLRRAAAPSRRGATLRVQAKKQTFSSFDELLEKSEKPVLVDFYATWCGPCQYMVPILQEVSEKLGDKIQVVKIDTEKYTSIANRYQIEALPTFIIFKNGKPCHRFEGALPANQLIQQIESALEVAK.

The N-terminal 58 residues, 1-58 (MAAFTSTTTAAAASPTPCRPAALVARSSAAPLRSAAPVVVAAGLRRAAAPSRRGATLR), are a transit peptide targeting the chloroplast. Residues 59 to 165 (VQAKKQTFSS…LIQQIESALE (107 aa)) enclose the Thioredoxin domain. Residues cysteine 89 and cysteine 92 each act as nucleophile in the active site. A disulfide bond links cysteine 89 and cysteine 92.

This sequence belongs to the thioredoxin family. Plant Y-type subfamily.

The protein localises to the plastid. It localises to the chloroplast. Probable thiol-disulfide oxidoreductase that may participate in various redox reactions. This chain is Thioredoxin Y, chloroplastic, found in Oryza sativa subsp. japonica (Rice).